Reading from the N-terminus, the 267-residue chain is Apolipoprotein A-I (267 aa).

The first 18 residues, 1–18 (MKAAVLTLAVLFLTGSQA), serve as a signal peptide directing secretion. Tandem repeats lie at residues 68–89 (LKLLDNWDSVTSTFSKLREQLG) and 90–111 (PVTQEFWDNLEKETEGLRQEMS). Residues 68-267 (LKLLDNWDSV…EEYTKKLNTQ (200 aa)) are 10 X approximate tandem repeats. A Methionine sulfoxide modification is found at Met110. One copy of the 3; half-length repeat lies at 112 to 122 (KDLEEVKAKVQ). Repeat copies occupy residues 123–144 (PYLDDFQKKWQEEMELYRQKVE), 145–166 (PLRAELQEGARQKLHELQEKLS), 167–188 (PLGEEMRDRARAHVDALRTHLA), 189–210 (PYSDELRQRLAARLEALKENGG), and 211–232 (ARLAEYHAKATEHLSTLSEKAK). Met136 carries the methionine sulfoxide modification. A 9; half-length repeat occupies 233–243 (PALEDLRQGLL). Repeat 10 spans residues 244-267 (PVLESFKVSFLSALEEYTKKLNTQ).

This sequence belongs to the apolipoprotein A1/A4/E family. Homodimer. Interacts with APOA1BP and CLU. Component of a sperm activating protein complex (SPAP), consisting of APOA1, an immunoglobulin heavy chain, an immunoglobulin light chain and albumin. Interacts with NDRG1. Interacts with SCGB3A2. Interacts with NAXE and YJEFN3. In terms of processing, glycosylated. Palmitoylated. Post-translationally, phosphorylation sites are present in the extracellular medium. In terms of tissue distribution, major protein of plasma HDL, also found in chylomicrons.

Its subcellular location is the secreted. Its function is as follows. Participates in the reverse transport of cholesterol from tissues to the liver for excretion by promoting cholesterol efflux from tissues and by acting as a cofactor for the lecithin cholesterol acyltransferase (LCAT). As part of the SPAP complex, activates spermatozoa motility. This is Apolipoprotein A-I (APOA1) from Pan troglodytes (Chimpanzee).